A 66-amino-acid chain; its full sequence is Large ribosomal subunit protein bL35 (66 aa).

Residues 1-16 are compositionally biased toward basic residues; sequence MPKQKTHRASAKRFKR. A disordered region spans residues 1-22; sequence MPKQKTHRASAKRFKRTGSGGL.

The protein belongs to the bacterial ribosomal protein bL35 family.

This is Large ribosomal subunit protein bL35 from Streptococcus suis (strain 05ZYH33).